The chain runs to 432 residues: Histidine--tRNA ligase (432 aa).

The tract at residues 412–432 (TQVPLAAFPPEEGRPTYDDYA) is disordered. Over residues 422–432 (EEGRPTYDDYA) the composition is skewed to basic and acidic residues.

The protein belongs to the class-II aminoacyl-tRNA synthetase family.

It localises to the cytoplasm. It catalyses the reaction tRNA(His) + L-histidine + ATP = L-histidyl-tRNA(His) + AMP + diphosphate + H(+). The sequence is that of Histidine--tRNA ligase from Natronomonas pharaonis (strain ATCC 35678 / DSM 2160 / CIP 103997 / JCM 8858 / NBRC 14720 / NCIMB 2260 / Gabara) (Halobacterium pharaonis).